An 828-amino-acid chain; its full sequence is Periplasmic nitrate reductase (828 aa).

The segment at residues 1–31 (MKLSRRHFMKANAVAAAAAVAGITIPIAVRA) is a signal peptide (tat-type signal). Positions 39–95 (IHWDKAPCRFCGVGCGVLVGTQNGRIVASQGDPEAPVNRGLNCIKGYFLPKIMYGQD) constitute a 4Fe-4S Mo/W bis-MGD-type domain. [4Fe-4S] cluster contacts are provided by Cys-46, Cys-49, Cys-53, and Cys-81. Mo-bis(molybdopterin guanine dinucleotide) is bound by residues Lys-83, Gln-150, Asn-175, Cys-179, 212–219 (WGSNMAEM), 243–247 (STYQH), 262–264 (QTD), Met-372, Gln-376, Asn-482, 508–509 (SD), Lys-531, Asp-558, and 718–727 (TGRVLEHWHT). Residue Phe-794 coordinates substrate. Mo-bis(molybdopterin guanine dinucleotide)-binding residues include Asn-802 and Lys-819.

It belongs to the prokaryotic molybdopterin-containing oxidoreductase family. NasA/NapA/NarB subfamily. In terms of assembly, component of the periplasmic nitrate reductase NapAB complex composed of NapA and NapB. Requires [4Fe-4S] cluster as cofactor. The cofactor is Mo-bis(molybdopterin guanine dinucleotide). Predicted to be exported by the Tat system. The position of the signal peptide cleavage has not been experimentally proven.

It localises to the periplasm. It catalyses the reaction 2 Fe(II)-[cytochrome] + nitrate + 2 H(+) = 2 Fe(III)-[cytochrome] + nitrite + H2O. In terms of biological role, catalytic subunit of the periplasmic nitrate reductase complex NapAB. Receives electrons from NapB and catalyzes the reduction of nitrate to nitrite. This chain is Periplasmic nitrate reductase, found in Pectobacterium atrosepticum (strain SCRI 1043 / ATCC BAA-672) (Erwinia carotovora subsp. atroseptica).